The following is a 398-amino-acid chain: Phosphoglycerate kinase (398 aa).

Residues 23 to 25 (DLN), arginine 38, 61 to 64 (HFGR), arginine 119, and arginine 152 each bind substrate. Residues lysine 202, glutamate 324, and 354 to 357 (GGDT) contribute to the ATP site.

The protein belongs to the phosphoglycerate kinase family. In terms of assembly, monomer.

Its subcellular location is the cytoplasm. The catalysed reaction is (2R)-3-phosphoglycerate + ATP = (2R)-3-phospho-glyceroyl phosphate + ADP. Its pathway is carbohydrate degradation; glycolysis; pyruvate from D-glyceraldehyde 3-phosphate: step 2/5. This is Phosphoglycerate kinase from Rhodopseudomonas palustris (strain ATCC BAA-98 / CGA009).